Here is a 216-residue protein sequence, read N- to C-terminus: Somatotropin (216 aa).

Positions 1-26 (MATGSQTSWLLTFTLLCLPWPQEAGA) are cleaved as a signal peptide. A Zn(2+)-binding site is contributed by His45. Cys78 and Cys189 are disulfide-bonded. Ser131 carries the post-translational modification Phosphoserine. Glu198 lines the Zn(2+) pocket. Cys206 and Cys214 are disulfide-bonded.

This sequence belongs to the somatotropin/prolactin family.

Its subcellular location is the secreted. In terms of biological role, plays an important role in growth control. Its major role in stimulating body growth is to stimulate the liver and other tissues to secrete IGF1. It stimulates both the differentiation and proliferation of myoblasts. It also stimulates amino acid uptake and protein synthesis in muscle and other tissues. The polypeptide is Somatotropin (GH1) (Spalax ehrenbergi (Middle East blind mole rat)).